Consider the following 180-residue polypeptide: Adenine phosphoribosyltransferase (180 aa).

The protein belongs to the purine/pyrimidine phosphoribosyltransferase family. Homodimer.

Its subcellular location is the cytoplasm. It catalyses the reaction AMP + diphosphate = 5-phospho-alpha-D-ribose 1-diphosphate + adenine. It functions in the pathway purine metabolism; AMP biosynthesis via salvage pathway; AMP from adenine: step 1/1. Catalyzes a salvage reaction resulting in the formation of AMP, that is energically less costly than de novo synthesis. The protein is Adenine phosphoribosyltransferase of Pasteurella multocida (strain Pm70).